The primary structure comprises 152 residues: Acidic phospholipase A2 S17-58 (152 aa).

The signal sequence occupies residues 1-19 (MYPAHLLVLLAVCVSLLGA). The propeptide occupies 20 to 27 (SNIPLPSL). 7 disulfide bridges follow: Cys38–Cys104, Cys54–Cys151, Cys56–Cys72, Cys71–Cys132, Cys78–Cys125, Cys88–Cys118, and Cys111–Cys123. Ca(2+)-binding residues include Tyr55, Gly57, and Gly59. The active site involves His75. Asp76 provides a ligand contact to Ca(2+). The active site involves Asp126.

It belongs to the phospholipase A2 family. Group I subfamily. D49 sub-subfamily. Ca(2+) serves as cofactor. Expressed by the venom gland.

It is found in the secreted. It catalyses the reaction a 1,2-diacyl-sn-glycero-3-phosphocholine + H2O = a 1-acyl-sn-glycero-3-phosphocholine + a fatty acid + H(+). Snake venom phospholipase A2 (PLA2) that inhibits collagen-induced platelet aggregation. PLA2 catalyzes the calcium-dependent hydrolysis of the 2-acyl groups in 3-sn-phosphoglycerides. The polypeptide is Acidic phospholipase A2 S17-58 (Austrelaps superbus (Lowland copperhead snake)).